An 881-amino-acid polypeptide reads, in one-letter code: Alanine--tRNA ligase (881 aa).

This sequence belongs to the class-II aminoacyl-tRNA synthetase family.

It localises to the cytoplasm. It carries out the reaction tRNA(Ala) + L-alanine + ATP = L-alanyl-tRNA(Ala) + AMP + diphosphate. Functionally, catalyzes the attachment of alanine to tRNA(Ala) in a two-step reaction: alanine is first activated by ATP to form Ala-AMP and then transferred to the acceptor end of tRNA(Ala). Also edits incorrectly charged Ser-tRNA(Ala) and Gly-tRNA(Ala) via its editing domain. The chain is Alanine--tRNA ligase (alaS) from Lacticaseibacillus paracasei (strain ATCC 334 / BCRC 17002 / CCUG 31169 / CIP 107868 / KCTC 3260 / NRRL B-441) (Lactobacillus paracasei).